The chain runs to 319 residues: Tyrosine--tRNA ligase (319 aa).

Residue tyrosine 40 coordinates L-tyrosine. The 'HIGH' region signature appears at proline 45 to histidine 53. Residues tyrosine 159, glutamine 163, aspartate 166, and glutamine 181 each contribute to the L-tyrosine site. The 'KMSKS' region motif lies at lysine 216–serine 220. Residue serine 219 participates in ATP binding.

The protein belongs to the class-I aminoacyl-tRNA synthetase family. TyrS type 3 subfamily. As to quaternary structure, homodimer.

Its subcellular location is the cytoplasm. The catalysed reaction is tRNA(Tyr) + L-tyrosine + ATP = L-tyrosyl-tRNA(Tyr) + AMP + diphosphate + H(+). Catalyzes the attachment of tyrosine to tRNA(Tyr) in a two-step reaction: tyrosine is first activated by ATP to form Tyr-AMP and then transferred to the acceptor end of tRNA(Tyr). In Methanococcus maripaludis (strain DSM 14266 / JCM 13030 / NBRC 101832 / S2 / LL), this protein is Tyrosine--tRNA ligase.